A 534-amino-acid chain; its full sequence is Ankyrin repeat domain-containing protein 34C (534 aa).

4 ANK repeats span residues 10-39 (TDGN…YINE), 43-80 (KGET…DPNI), 84-114 (SGKT…DPSL), and 118-147 (TGAS…AKGK). Residues 159 to 205 (SGTKTTKQYLNVPPSPKVEDRQSPPLCTTPSDVELKTSGLASPPSEK) are disordered. A Phosphoserine modification is found at Ser-301. 2 disordered regions span residues 332 to 368 (YEKG…LKDP) and 384 to 403 (QPVG…GPLD). A Phosphoserine modification is found at Ser-446. The disordered stretch occupies residues 480-503 (SKPASPLASGLKSMAPVAPNSPKR).

Belongs to the ANKRD34 family.

This Mus musculus (Mouse) protein is Ankyrin repeat domain-containing protein 34C (Ankrd34c).